Consider the following 1486-residue polypeptide: Chromosome partition protein MukB (1486 aa).

34–41 (GGNGAGKS) contributes to the ATP binding site. 3 coiled-coil regions span residues 326-418 (LEAD…QYNQ), 444-480 (LETF…QAYQ), and 509-603 (RHLA…RAPV). The segment at 666 to 783 (PGGSEDQRLN…EVPLFGRAAR (118 aa)) is flexible hinge. Coiled coils occupy residues 835-923 (EAEI…AKLE), 977-1115 (EMLS…TAKA), and 1209-1266 (VEAI…QNVS).

It belongs to the SMC family. MukB subfamily. As to quaternary structure, homodimerization via its hinge domain. Binds to DNA via its C-terminal region. Interacts, and probably forms a ternary complex, with MukE and MukF via its C-terminal region. The complex formation is stimulated by calcium or magnesium. Interacts with tubulin-related protein FtsZ.

Its subcellular location is the cytoplasm. It localises to the nucleoid. Its function is as follows. Plays a central role in chromosome condensation, segregation and cell cycle progression. Functions as a homodimer, which is essential for chromosome partition. Involved in negative DNA supercoiling in vivo, and by this means organize and compact chromosomes. May achieve or facilitate chromosome segregation by condensation DNA from both sides of a centrally located replisome during cell division. The sequence is that of Chromosome partition protein MukB from Escherichia coli O6:K15:H31 (strain 536 / UPEC).